A 329-amino-acid chain; its full sequence is Beta-ketoacyl-[acyl-carrier-protein] synthase III (329 aa).

Catalysis depends on residues cysteine 113 and histidine 255. The interval 256–260 (QANQR) is ACP-binding. The active site involves asparagine 285.

Belongs to the thiolase-like superfamily. FabH family. As to quaternary structure, homodimer.

The protein resides in the cytoplasm. The catalysed reaction is malonyl-[ACP] + acetyl-CoA + H(+) = 3-oxobutanoyl-[ACP] + CO2 + CoA. It participates in lipid metabolism; fatty acid biosynthesis. Its function is as follows. Catalyzes the condensation reaction of fatty acid synthesis by the addition to an acyl acceptor of two carbons from malonyl-ACP. Catalyzes the first condensation reaction which initiates fatty acid synthesis and may therefore play a role in governing the total rate of fatty acid production. Possesses both acetoacetyl-ACP synthase and acetyl transacylase activities. Its substrate specificity determines the biosynthesis of branched-chain and/or straight-chain of fatty acids. This Chlorobaculum tepidum (strain ATCC 49652 / DSM 12025 / NBRC 103806 / TLS) (Chlorobium tepidum) protein is Beta-ketoacyl-[acyl-carrier-protein] synthase III.